Here is a 397-residue protein sequence, read N- to C-terminus: Staphylopine export protein (397 aa).

The next 12 helical transmembrane spans lie at 12–32, 38–58, 77–97, 102–122, 134–154, 158–178, 217–237, 239–259, 285–305, 309–329, 337–357, and 363–383; these read LYIL…FIPL, GATN…AMVF, IILI…LEGY, VMQG…IIDA, LYSL…VGIW, NISL…FFGY, GIIM…VPLY, VSLG…AVVA, LLVI…IIFY, ILIG…LSFV, MLLG…GALM, and LVGF…IMIM.

This sequence belongs to the major facilitator superfamily.

The protein localises to the cell membrane. In terms of biological role, involved in the export of the metallophore staphylopine. The protein is Staphylopine export protein of Staphylococcus aureus (strain Mu50 / ATCC 700699).